Reading from the N-terminus, the 436-residue chain is GTPase Der (436 aa).

EngA-type G domains follow at residues 4–167 (PTVA…PVEE) and 175–351 (IRFS…ESQN). Residues 10 to 17 (GRPNVGKS), 57 to 61 (DTGGI), 119 to 122 (NKVD), 181 to 188 (GRPNVGKS), 229 to 233 (DTAGM), and 294 to 297 (NKWD) each bind GTP. Residues 352–436 (KRIPSAVLND…PIHLIARKRK (85 aa)) enclose the KH-like domain.

This sequence belongs to the TRAFAC class TrmE-Era-EngA-EngB-Septin-like GTPase superfamily. EngA (Der) GTPase family. In terms of assembly, associates with the 50S ribosomal subunit.

Its function is as follows. GTPase that plays an essential role in the late steps of ribosome biogenesis. The chain is GTPase Der from Streptococcus pyogenes serotype M1.